An 886-amino-acid polypeptide reads, in one-letter code: Alanine--tRNA ligase (886 aa).

4 residues coordinate Zn(2+): H564, H568, C666, and H670.

Belongs to the class-II aminoacyl-tRNA synthetase family. It depends on Zn(2+) as a cofactor.

It localises to the cytoplasm. The catalysed reaction is tRNA(Ala) + L-alanine + ATP = L-alanyl-tRNA(Ala) + AMP + diphosphate. Its function is as follows. Catalyzes the attachment of alanine to tRNA(Ala) in a two-step reaction: alanine is first activated by ATP to form Ala-AMP and then transferred to the acceptor end of tRNA(Ala). Also edits incorrectly charged Ser-tRNA(Ala) and Gly-tRNA(Ala) via its editing domain. In Prochlorococcus marinus (strain MIT 9515), this protein is Alanine--tRNA ligase.